A 334-amino-acid chain; its full sequence is Cytoskeleton protein RodZ (334 aa).

Topologically, residues 1–111 (MNTEATHDQN…LGKRRKKRDG (111 aa)) are cytoplasmic. Positions 19–71 (LRNAREQLGLSQQAVAERLCLKVSTVRDIEEDKAPSDLASTFLRGYIRSYARL) constitute an HTH cro/C1-type domain. Positions 30–49 (QQAVAERLCLKVSTVRDIEE) form a DNA-binding region, H-T-H motif. The helical; Signal-anchor for type II membrane protein transmembrane segment at 112–132 (WLMSFTWLVLFVVVGLTGAWW) threads the bilayer. Residues 133–334 (WQNHKAHQEE…TLNAEPTPAQ (202 aa)) lie on the Periplasmic side of the membrane. Residues 152–210 (AGLNADKDSGQSVPLDTGAVTSQDTTPAQTAPAPATPVDSTAATQTPAPTAAATQNTVV) are disordered. Positions 161 to 175 (GQSVPLDTGAVTSQD) are enriched in polar residues. The span at 176-210 (TTPAQTAPAPATPVDSTAATQTPAPTAAATQNTVV) shows a compositional bias: low complexity.

The protein belongs to the RodZ family.

The protein localises to the cell inner membrane. In terms of biological role, cytoskeletal protein that is involved in cell-shape control through regulation of the length of the long axis. This Salmonella gallinarum (strain 287/91 / NCTC 13346) protein is Cytoskeleton protein RodZ.